A 425-amino-acid chain; its full sequence is RNA polymerase II-associated factor 1 homolog (425 aa).

The stretch at 152-174 forms a coiled coil; the sequence is KKNQQVEDMYRDKQSQIDAINKT. Positions 331 to 425 are disordered; it reads SRKSKLTLTY…KEPTVDSDSD (95 aa). 2 stretches are compositionally biased toward basic and acidic residues: residues 344 to 380 and 393 to 402; these read SELEQKDMNKREAELYEQPKTRKQEILEKIQEKKEEG and DKPQKSRSDS.

Belongs to the PAF1 family. As to quaternary structure, component of the PAF1 complex which consists of at least cdc-73, ctr-9, leo-1, pafo-1 and rtfo-1.

It localises to the nucleus. Its function is as follows. Component of the PAF1 complex which is a multifunctional complex involved in transcription initiation via genetic interactions with TATA-binding proteins, elongation and transcription-coupled histone modification. This Caenorhabditis elegans protein is RNA polymerase II-associated factor 1 homolog.